A 609-amino-acid chain; its full sequence is Actin-interacting protein 1-2 (609 aa).

WD repeat units follow at residues 2-42, 54-93, 97-141, 142-182, 185-224, 230-269, 277-318, 322-362, 445-484, 489-528, 532-571, and 576-609; these read ELSE…VTLD, EHAYPATVARYSPNGEWIASGDVSGTVRIWGAYNDHVLKN, VLAG…GEFD, GHSR…FKLS, EHSNFVNCVRFAPDGSKFITVSSDKKGIIYDGKTCEILGE, GHKGSIYAVSWSPDGKQVLTVSADKSAKIWDISDNGSGSL, GSSG…KSPF, GHMK…CGKL, NLGFIVTALAVTPDGTEAVIGGQDGKLHLYSINGDSLTEE, RHRGAISVIRYSPDLSMFASADLNREAVVWDRVSREMKLK, YHSARINCLAWSPNSTMVATGSLDTCVIVYEVDKPASSRM, and AHLGGVYGLGFADDSHVVSSGEDACIRVWSFTPQ.

Expressed in leaves, stems, flower buds and flowers.

Its function is as follows. Binds actin. Enhances the F-actin depolymerization activity of actin-depolymerizing factor (ADF) proteins. This chain is Actin-interacting protein 1-2, found in Arabidopsis thaliana (Mouse-ear cress).